A 544-amino-acid polypeptide reads, in one-letter code: Methionine--tRNA ligase (544 aa).

A 'HIGH' region motif is present at residues 10 to 20; it reads PYANGSLHLGH. 4 residues coordinate Zn(2+): Cys-141, Cys-144, Cys-153, and Cys-156. A 'KMSKS' region motif is present at residues 329–333; the sequence is KLSTS. Thr-332 provides a ligand contact to ATP.

This sequence belongs to the class-I aminoacyl-tRNA synthetase family. MetG type 1 subfamily. Monomer. It depends on Zn(2+) as a cofactor.

The protein localises to the cytoplasm. The enzyme catalyses tRNA(Met) + L-methionine + ATP = L-methionyl-tRNA(Met) + AMP + diphosphate. In terms of biological role, is required not only for elongation of protein synthesis but also for the initiation of all mRNA translation through initiator tRNA(fMet) aminoacylation. This is Methionine--tRNA ligase from Bacillus cereus (strain B4264).